A 1235-amino-acid chain; its full sequence is Stress response protein NST1 (1235 aa).

Residues 1–19 are compositionally biased toward polar residues; that stretch reads MPSNSKRSMAPPTNVSKQI. 7 disordered regions span residues 1–210, 300–369, 416–480, 517–848, 904–987, 1001–1023, and 1186–1235; these read MPSN…AHKV, FENG…LEDA, RMQR…EQRM, EELE…IPAM, GHTS…NQQE, LDDSDIPLTAPPSQPLSSALPPG, and EPDN…TTGF. Residues 20 to 34 are compositionally biased toward low complexity; that stretch reads SATSTSKKAPTKPTT. Polar residues predominate over residues 35–52; sequence QNSIAGAKSTGSPETRTS. 2 stretches are compositionally biased toward basic residues: residues 70–80 and 159–171; these read NRKKQKRRQKQ and RKGKKKKNRKSRS. Residues 179–189 show a composition bias toward low complexity; the sequence is SSTSMSTPSAS. Residues 340–367 show a composition bias toward acidic residues; the sequence is LPDDDEDLDDDYDEDDEDDEPYSEDELE. The span at 426 to 437 shows a compositional bias: low complexity; that stretch reads AAASAAHQSMHA. Over residues 445–475 the composition is skewed to acidic residues; that stretch reads LDEEEYDDEEEEDYDSQDDEEYEEDEMDAMT. Residues 502-714 are a coiled coil; that stretch reads AYREKIARER…QAAAVQAAKR (213 aa). 2 stretches are compositionally biased toward basic and acidic residues: residues 517-539 and 549-697; these read EELEEENRLDVEREAKKAREAQK and QAKE…REEQ. Low complexity predominate over residues 698–715; sequence AAQQAAAQAAAVQAAKRA. 4 stretches are compositionally biased toward polar residues: residues 759-772, 779-794, 831-843, and 924-959; these read QPSQQGSHASSPRS, ISQTSSLSPGSVSTTI, PMQSLNGLPTNPG, and APQSSQNSGASLTHTRQPSISFERNQHETQPQSQPI. Positions 1188–1198 are enriched in polar residues; sequence DNNSISSSTRG. A compositionally biased stretch (low complexity) spans 1206–1221; it reads GSPVPGSSLPTPGSGS. Residues 1222–1235 are compositionally biased toward polar residues; that stretch reads RQFATTNISPTTGF.

The protein belongs to the NST1 family.

It is found in the cytoplasm. Functionally, may act as a negative regulator of salt tolerance. This Coccidioides immitis (strain RS) (Valley fever fungus) protein is Stress response protein NST1 (NST1).